The sequence spans 483 residues: Krueppel-like factor 4 (483 aa).

The tract at residues 22-42 (TFASGPAGREKTLRPAGAPTN) is disordered. K32 is covalently cross-linked (Glycyl lysine isopeptide (Lys-Gly) (interchain with G-Cter in ubiquitin)). Residues 99 to 107 (DLLDLDFIL) carry the 9aaTAD motif. A Phosphoserine modification is found at S251. A disordered region spans residues 294–395 (AGPQLSNGHR…KRGRRSWPRK (102 aa)). Residues 338–356 (LPLPPGFHPHPGPNYPPFL) are compositionally biased toward pro residues. A 5-glutamyl polyglutamate modification is found at E381. Over residues 386 to 395 (KRGRRSWPRK) the composition is skewed to basic residues. An interaction with ZNF296 region spans residues 386 to 483 (KRGRRSWPRK…HLALHMKRHF (98 aa)). 3 consecutive C2H2-type zinc fingers follow at residues 400 to 424 (HTCD…LRTH), 430 to 454 (YHCD…YRKH), and 460 to 482 (FQCQ…MKRH). An interaction with target DNA region spans residues 443–474 (RSDELTRHYRKHTGHRPFQCQKCDRAFSRSDH).

This sequence belongs to the krueppel C2H2-type zinc-finger protein family. Interacts with MUC1 (via the C-terminal domain). Interacts with POU5F1/OCT4 and SOX2. Interacts with MEIS2 isoform MeisD and PBX1 isoform PBX1a. Interacts with ZNF296. Interacts with GLIS1. Interacts with BTRC; this interaction leads to KLF4 ubiquitination and subsequent degradation. Interacts with IPO7; the interaction facilitates nuclear translocation of KLF4 in dental papilla cells. Ubiquitinated. 'Lys-48'-linked ubiquitinated and targeted for proteasomal degradation by the SCF(BTRC) E3 ubiquitin-protein ligase complex, thereby negatively regulating cell pluripotency maintenance and embryogenesis. In terms of processing, polyglutamylated by TTLL1 and TTLL4 at Glu-381, which inhibits KLF4 binding with E3 ligase component BTRC, thereby impeding ubiquitination. Deglutamylated by CCP1 and CCP6; deglutamylation promotes KLF4 ubiquitination. KLF4 glutamylation state plays a critical role in the regulation of its function in cell reprogramming, pluripotency maintenance and embryogenesis. Highest expression in the colon. Lower levels in testis, lung and small intestine.

It is found in the nucleus. It localises to the cytoplasm. In terms of biological role, transcription factor; can act both as activator and as repressor. Binds the 5'-CACCC-3' core sequence. Binds to the promoter region of its own gene and can activate its own transcription. Regulates the expression of key transcription factors during embryonic development. Plays an important role in maintaining embryonic stem cells, and in preventing their differentiation. Required for establishing the barrier function of the skin and for postnatal maturation and maintenance of the ocular surface. Involved in the differentiation of epithelial cells and may also function in skeletal and kidney development. Contributes to the down-regulation of p53/TP53 transcription. This Mus musculus (Mouse) protein is Krueppel-like factor 4 (Klf4).